Consider the following 1385-residue polypeptide: Pesticidal crystal protein Cry5Aa (1385 aa).

2 disordered regions span residues 768-799 (NITV…GQYN) and 1359-1385 (PLPT…NNNQ). A compositionally biased stretch (gly residues) spans 782–796 (NGGGDGGGNGGGDGG). Residues 1370 to 1385 (NTASSTNSDTSMNNNQ) are compositionally biased toward low complexity.

Belongs to the delta endotoxin family.

Its function is as follows. Endotoxin with nematicidal activity. In Bacillus thuringiensis subsp. darmstadiensis, this protein is Pesticidal crystal protein Cry5Aa (cry5Aa).